Consider the following 333-residue polypeptide: Pro-cathepsin H (333 aa).

The first 20 residues, 1–20 (MWAALPLLCAGAWLLSTGAT), serve as a signal peptide directing secretion. The propeptide at 21 to 95 (AELTVNAIEK…AEIKHKFLWS (75 aa)) is activation peptide. Asn70 and Asn99 each carry an N-linked (GlcNAc...) asparagine glycan. Disulfide bonds link Cys100/Cys325, Cys136/Cys179, Cys170/Cys212, and Cys270/Cys320. The propeptide occupies 104-113 (KSNYLRGTGP). Cys139 is an active-site residue. The N-linked (GlcNAc...) asparagine glycan is linked to Asn228. Active-site residues include His279 and Asn299.

It belongs to the peptidase C1 family. As to quaternary structure, composed of a mini chain and a large chain. The large chain may be split into heavy and light chain. All chains are held together by disulfide bonds. As to expression, widely expressed with highest expression found in non-skeletal tissues. Low levels found in skeletal tissue.

The protein localises to the lysosome. The catalysed reaction is Hydrolysis of proteins, acting as an aminopeptidase (notably, cleaving Arg-|-Xaa bonds) as well as an endopeptidase.. Important for the overall degradation of proteins in lysosomes. This chain is Pro-cathepsin H (Ctsh), found in Mus musculus (Mouse).